The following is a 1311-amino-acid chain: Transcriptional regulator ATRX homolog (1311 aa).

Positions 1 to 384 are disordered; that stretch reads MGKKNPNARH…KQKNKRKHIR (384 aa). Basic and acidic residues predominate over residues 28–40; the sequence is SRRESATESKSAS. Positions 61–83 are enriched in low complexity; that stretch reads KASGKATVSSSSDSDQAVANSSA. Residues 114–125 are compositionally biased toward polar residues; sequence RGSQQKNVTIND. Phosphoserine is present on residues Ser126 and Ser127. Residues 155–166 show a composition bias toward acidic residues; that stretch reads SDSEEVDEEEES. A compositionally biased stretch (basic and acidic residues) spans 181-202; it reads KPEKNSSKASKESIEKRQKAQK. Positions 219-237 are enriched in low complexity; sequence RRGSLSSERSSRASSSRAE. Positions 241 to 265 are enriched in basic residues; that stretch reads RPKRCVVRLKRVSLPKTKPAQKPKK. 3 positions are modified to phosphoserine: Ser267, Ser268, and Ser270. Positions 290–306 are enriched in acidic residues; the sequence is EADSDYEAPAAEEEEEE. Phosphoserine occurs at positions 336, 338, 342, and 343. Over residues 336–351 the composition is skewed to basic and acidic residues; that stretch reads SESDKGSSDFEPEEKQ. Positions 352-361 are enriched in basic residues; it reads KKKGRKRIKK. Residues 476-664 form the Helicase ATP-binding domain; that stretch reads ESQEKPGSGC…YCMIQFVKPN (189 aa). Position 489–496 (489–496) interacts with ATP; it reads HCMGLGKT. A DEGH box motif is present at residues 615-618; the sequence is DEGH. Residues 837 to 878 are disordered; sequence ASSGKVKKRKTRNGNAGGGDSDSDLEMLGGLGGGSSVQKDDP. A phosphoserine mark is found at Ser857 and Ser859. The Helicase C-terminal domain maps to 905–1085; it reads RLLQQCEAIG…SRHYNQTDLM (181 aa). The tract at residues 1285–1311 is disordered; that stretch reads MAGGSVAHGPPAAPAPGFEPDKVYEID.

This sequence belongs to the SNF2/RAD54 helicase family.

Its subcellular location is the nucleus. It is found in the chromosome. It carries out the reaction ATP + H2O = ADP + phosphate + H(+). Its function is as follows. Global transcriptional regulator. Modifies gene expression by affecting chromatin. The sequence is that of Transcriptional regulator ATRX homolog (XNP) from Drosophila melanogaster (Fruit fly).